A 276-amino-acid chain; its full sequence is Diaminopimelate epimerase (276 aa).

3 residues coordinate substrate: asparagine 13, glutamine 46, and asparagine 66. Cysteine 75 serves as the catalytic Proton donor. Residues 76-77 (GN), asparagine 159, asparagine 192, and 210-211 (ER) each bind substrate. Residue cysteine 219 is the Proton acceptor of the active site. 220 to 221 (GT) is a binding site for substrate.

It belongs to the diaminopimelate epimerase family. In terms of assembly, homodimer.

It localises to the cytoplasm. The enzyme catalyses (2S,6S)-2,6-diaminopimelate = meso-2,6-diaminopimelate. Its pathway is amino-acid biosynthesis; L-lysine biosynthesis via DAP pathway; DL-2,6-diaminopimelate from LL-2,6-diaminopimelate: step 1/1. Catalyzes the stereoinversion of LL-2,6-diaminopimelate (L,L-DAP) to meso-diaminopimelate (meso-DAP), a precursor of L-lysine and an essential component of the bacterial peptidoglycan. The protein is Diaminopimelate epimerase of Teredinibacter turnerae (strain ATCC 39867 / T7901).